The primary structure comprises 295 residues: Dehydrodolichyl diphosphate synthase 6 (295 aa).

It belongs to the UPP synthase family. Mg(2+) is required as a cofactor.

Its pathway is protein modification; protein glycosylation. Its function is as follows. Catalyzes cis-prenyl chain elongation to produce the polyprenyl backbone of dolichol, a glycosyl carrier-lipid required for the biosynthesis of several classes of glycoprotein. The protein is Dehydrodolichyl diphosphate synthase 6 of Arabidopsis thaliana (Mouse-ear cress).